The primary structure comprises 137 residues: Putative pre-16S rRNA nuclease (137 aa).

It belongs to the YqgF nuclease family.

The protein localises to the cytoplasm. Could be a nuclease involved in processing of the 5'-end of pre-16S rRNA. This chain is Putative pre-16S rRNA nuclease, found in Actinobacillus pleuropneumoniae serotype 5b (strain L20).